A 533-amino-acid chain; its full sequence is Beta-1,4 N-acetylgalactosaminyltransferase 1 (533 aa).

Residues 1–7 (MRLDRRA) are Cytoplasmic-facing. Residues 8–25 (LYALVLLLACASLGLLYA) traverse the membrane as a helical; Signal-anchor for type II membrane protein segment. The Lumenal segment spans residues 26–533 (STRDAPGLPN…KHRLQCMTAE (508 aa)). 2 N-linked (GlcNAc...) asparagine glycosylation sites follow: Asn-79 and Asn-274. An intrachain disulfide couples Cys-429 to Cys-476.

This sequence belongs to the glycosyltransferase 2 family. As to quaternary structure, homodimer; disulfide-linked. Strongly expressed in brain, testis, spleen, and to a lesser extent in liver.

It localises to the golgi apparatus membrane. The catalysed reaction is a ganglioside GM3 (d18:1(4E)) + UDP-N-acetyl-alpha-D-galactosamine = a ganglioside GM2 (d18:1(4E)) + UDP + H(+). The enzyme catalyses a ganglioside GD3 (d18:1(4E)) + UDP-N-acetyl-alpha-D-galactosamine = a ganglioside GD2 (d18:1(4E)) + UDP + H(+). It catalyses the reaction a ganglioside GM3 + UDP-N-acetyl-alpha-D-galactosamine = a ganglioside GM2 + UDP + H(+). It carries out the reaction a ganglioside GD3 + UDP-N-acetyl-alpha-D-galactosamine = a ganglioside GD2 + UDP + H(+). The catalysed reaction is a ganglioside GD1a + UDP-N-acetyl-alpha-D-galactosamine = a ganglioside GalNAc-GD1a + UDP + H(+). The enzyme catalyses a ganglioside GT3 (d18:1(4E)) + UDP-N-acetyl-alpha-D-galactosamine = a ganglioside GT2 (d18:1(4E)) + UDP + H(+). It catalyses the reaction a beta-D-Gal-(1-&gt;4)-beta-D-Glc-(1&lt;-&gt;1)-Cer(d18:1(4E)) + UDP-N-acetyl-alpha-D-galactosamine = a ganglioside GA2 (d18:1(4E)) + UDP + H(+). It carries out the reaction a neolactoside IV(3)-alpha-NeuGc-nLc4Cer + UDP-N-acetyl-alpha-D-galactosamine = a neolactoside IV(4)-beta-GalNAc-IV(3)-alpha-NeuGc-nLc4Cer + UDP + H(+). It functions in the pathway sphingolipid metabolism. Its function is as follows. Involved in the biosynthesis of gangliosides GM2, GD2, GT2 and GA2 from GM3, GD3, GT3 and GA3, respectively. The protein is Beta-1,4 N-acetylgalactosaminyltransferase 1 of Rattus norvegicus (Rat).